Consider the following 588-residue polypeptide: Phenol 2-monooxygenase fsqG (588 aa).

FAD is bound by residues 9-38 (DVLIIGAGPAGLTTANSFNGSNCRVRLIDW), 17-18 (PA), 37-39 (DWK), 45-50 (TGRADG), Tyr232, 289-299 (ARHNRIFLAGD), Asp299, and 309-313 (GQGMN). Substrate-binding residues include Asp49 and Tyr232.

This sequence belongs to the PheA/TfdB FAD monooxygenase family. In terms of assembly, homodimer. The cofactor is FAD.

The protein operates within secondary metabolite biosynthesis. Phenol 2-monooxygenase; part of the gene cluster that mediates the biosynthesis of the isoquinoline alkaloids fumisoquin A, fumisoquin B and fumisoquin C; as well as small amounts of fumipyrrole as a shunt metabolite. The products of the cluster lead to a brown coloration and are important for growth and conidiation. The nonribosomal peptide synthetase-like protein fsqF, which lacks a canonical condensation domain, is required for addition of a serine-derived dehydroalanine moiety to activated tyrosine but is not essential for the subsequent steps leading to isoquinoline formation. A different enzyme, most likely the ATP-grasp enzyme fsqD, is responsible for activation of tyrosine. Three additional enzymes encoded by the fsq cluster, the N-methyltransferase fsqC, the phenol 2-monooxygenase fsqG and the FAD-dependent oxidase fsqB, catalyze the formation of the isoquinoline ring system in the fumisoquins. FsqB converts the fspF thiolation domain-bound (2S,4S,5S)-2-amino-6-(3,4-dihydroxyphenyl)-4-hydroxy-5-(methylamino)hexanoyl into isoquinoline. The cyclization most likely proceeds via a two-step mechanism, beginning with FAD-dependent oxidation of the methyl group to an iminium species followed by electrophilic attack on the deprotonated phenol. This is Phenol 2-monooxygenase fsqG from Aspergillus fumigatus (strain ATCC MYA-4609 / CBS 101355 / FGSC A1100 / Af293) (Neosartorya fumigata).